Consider the following 351-residue polypeptide: MLDQLSVESIPPLLGASKAQLTHWAQTYQQPAYRGQQVHQWIYQKGVHSLSDITVLPKQWRTEIADIPVGRSQIHHRSAAQDGTVKYLLKLADGQIIETVGIPTQKRLTVCVSSQVGCPMGCDFCATGKGEYQRNLACHEIVDQVLTVQEDFQQRVGNVVFMGMGEPLLNLEQVLAAVRSLNQDVGIGQRSLTVSTVGIPKQILKLAQHQLQITLAVSLHASNQRIRTQLVPSAKHYPLEKLLKDCRAYVTQTGRRVTFEYIVLSGVNDQTEHALELAHHLRGFQSHVNLIPYNPISEVDYQRPTQKQLQQFLNSLQSQHITASIRRSRGLDKDAACGQLRATQMIDPASS.

Glu98 serves as the catalytic Proton acceptor. A Radical SAM core domain is found at 104–332; the sequence is TQKRLTVCVS…ASIRRSRGLD (229 aa). Residues Cys111 and Cys337 are joined by a disulfide bond. Positions 118, 122, and 125 each coordinate [4Fe-4S] cluster. S-adenosyl-L-methionine contacts are provided by residues 165 to 166, Ser195, 218 to 220, and Asn294; these read GE and SLH. Cys337 functions as the S-methylcysteine intermediate in the catalytic mechanism.

The protein belongs to the radical SAM superfamily. RlmN family. [4Fe-4S] cluster serves as cofactor.

The protein resides in the cytoplasm. It carries out the reaction adenosine(2503) in 23S rRNA + 2 reduced [2Fe-2S]-[ferredoxin] + 2 S-adenosyl-L-methionine = 2-methyladenosine(2503) in 23S rRNA + 5'-deoxyadenosine + L-methionine + 2 oxidized [2Fe-2S]-[ferredoxin] + S-adenosyl-L-homocysteine. The enzyme catalyses adenosine(37) in tRNA + 2 reduced [2Fe-2S]-[ferredoxin] + 2 S-adenosyl-L-methionine = 2-methyladenosine(37) in tRNA + 5'-deoxyadenosine + L-methionine + 2 oxidized [2Fe-2S]-[ferredoxin] + S-adenosyl-L-homocysteine. Specifically methylates position 2 of adenine 2503 in 23S rRNA and position 2 of adenine 37 in tRNAs. This chain is Probable dual-specificity RNA methyltransferase RlmN, found in Acaryochloris marina (strain MBIC 11017).